A 254-amino-acid polypeptide reads, in one-letter code: Bowman-Birk type bran trypsin inhibitor (254 aa).

An N-terminal signal peptide occupies residues 1–22; sequence MSNTTMATSTILLFLLAGLAAA. The propeptide occupies 23–118; it reads HGDGDTTIRL…KCTAALDGLS (96 aa). 3 repeats span residues 46–120, 121–187, and 188–251; these read KPWD…LSME, RPWK…FCTP, and RPWG…CKPR. Intrachain disulfides connect cysteine 125-cysteine 185, cysteine 126-cysteine 143, cysteine 152-cysteine 159, cysteine 156-cysteine 172, cysteine 193-cysteine 248, cysteine 194-cysteine 209, cysteine 199-cysteine 207, cysteine 216-cysteine 223, and cysteine 220-cysteine 236. Residues 252–254 constitute a propeptide that is removed on maturation; the sequence is AEN.

Belongs to the Bowman-Birk serine protease inhibitor family.

This Oryza sativa subsp. japonica (Rice) protein is Bowman-Birk type bran trypsin inhibitor (RBBI3.3).